The primary structure comprises 896 residues: Protein translocase subunit SecA (896 aa).

ATP is bound by residues Gln-87, 105–109 (GEGKT), and Asp-507. Positions 855-879 (LSENDEASETQTFRRQEKKIGRNDP) are disordered. Positions 866 to 876 (TFRRQEKKIGR) are enriched in basic and acidic residues. Residues Cys-880, Cys-882, Cys-891, and His-892 each contribute to the Zn(2+) site.

This sequence belongs to the SecA family. Monomer and homodimer. Part of the essential Sec protein translocation apparatus which comprises SecA, SecYEG and auxiliary proteins SecDF-YajC and YidC. Requires Zn(2+) as cofactor.

Its subcellular location is the cell inner membrane. The protein resides in the cytoplasm. The catalysed reaction is ATP + H2O + cellular proteinSide 1 = ADP + phosphate + cellular proteinSide 2.. Functionally, part of the Sec protein translocase complex. Interacts with the SecYEG preprotein conducting channel. Has a central role in coupling the hydrolysis of ATP to the transfer of proteins into and across the cell membrane, serving both as a receptor for the preprotein-SecB complex and as an ATP-driven molecular motor driving the stepwise translocation of polypeptide chains across the membrane. This Legionella pneumophila (strain Lens) protein is Protein translocase subunit SecA.